Consider the following 1776-residue polypeptide: Histone transcription regulator 3 homolog (1776 aa).

Disordered regions lie at residues 180 to 218 (IPVP…IDEG), 241 to 260 (NDGK…VEGS), and 1709 to 1776 (ADTI…SASE). Residues 190–206 (DDDVEKNDSKEVDKENN) show a composition bias toward basic and acidic residues. 2 stretches are compositionally biased toward basic and acidic residues: residues 1716-1742 (NNDK…RTLD) and 1766-1776 (LNSDHHDSASE).

The protein belongs to the HIR3 family.

It localises to the nucleus. Functionally, has a role in a nucleosome assembly pathway that is required for the integrity of heterochromatin and proper chromosome segregation. This Debaryomyces hansenii (strain ATCC 36239 / CBS 767 / BCRC 21394 / JCM 1990 / NBRC 0083 / IGC 2968) (Yeast) protein is Histone transcription regulator 3 homolog (HIR3).